We begin with the raw amino-acid sequence, 325 residues long: L-lactate dehydrogenase (325 aa).

Residues V21, D42, K47, Y73, and 87 to 88 (GA) each bind NAD(+). Residues Q90, R96, and 128–131 (NPVD) contribute to the substrate site. NAD(+) contacts are provided by residues 126–128 (ATN) and S151. 156 to 159 (DTAR) lines the substrate pocket. Positions 161 and 176 each coordinate beta-D-fructose 1,6-bisphosphate. H183 acts as the Proton acceptor in catalysis. The residue at position 228 (Y228) is a Phosphotyrosine. Substrate is bound at residue T237.

Belongs to the LDH/MDH superfamily. LDH family. As to quaternary structure, homotetramer.

It is found in the cytoplasm. It catalyses the reaction (S)-lactate + NAD(+) = pyruvate + NADH + H(+). The protein operates within fermentation; pyruvate fermentation to lactate; (S)-lactate from pyruvate: step 1/1. Allosterically activated by fructose 1,6-bisphosphate (FBP). Functionally, catalyzes the conversion of lactate to pyruvate. This Shouchella clausii (strain KSM-K16) (Alkalihalobacillus clausii) protein is L-lactate dehydrogenase.